The following is a 236-amino-acid chain: ATP synthase subunit a (236 aa).

5 helical membrane-spanning segments follow: residues 17–37 (WTNL…LFGL), 76–96 (SFFV…GLII), 113–133 (PVVT…AGVA), 170–190 (IFGN…MAFS), and 196–216 (MIVS…IGAI).

Belongs to the ATPase A chain family. F-type ATPases have 2 components, CF(1) - the catalytic core - and CF(0) - the membrane proton channel. CF(1) has five subunits: alpha(3), beta(3), gamma(1), delta(1), epsilon(1). CF(0) has three main subunits: a(1), b(2) and c(9-12). The alpha and beta chains form an alternating ring which encloses part of the gamma chain. CF(1) is attached to CF(0) by a central stalk formed by the gamma and epsilon chains, while a peripheral stalk is formed by the delta and b chains.

Its subcellular location is the cell membrane. Functionally, key component of the proton channel; it plays a direct role in the translocation of protons across the membrane. This is ATP synthase subunit a from Limosilactobacillus fermentum (strain NBRC 3956 / LMG 18251) (Lactobacillus fermentum).